A 56-amino-acid chain; its full sequence is MICYNHQSSEPPTTKTCSEGQCYKKSWSDHRGTIIERGCACPNVKPGVKIICCRSC.

4 disulfide bridges follow: Cys3–Cys22, Cys17–Cys39, Cys41–Cys52, and Cys53–Cys56.

The protein belongs to the three-finger toxin family. Short-chain subfamily. Type I alpha-neurotoxin sub-subfamily. As to expression, expressed by the venom gland.

Its subcellular location is the secreted. In terms of biological role, binds to muscle nicotinic acetylcholine receptor (nAChR) and inhibit acetylcholine from binding to the receptor, thereby impairing neuromuscular transmission. This chain is Frontoxin I, found in Micrurus frontalis (Coral snake).